A 305-amino-acid chain; its full sequence is GTPase Era (305 aa).

Residues 13–181 (RCGYVAIVGR…EKLVAERLPE (169 aa)) form the Era-type G domain. The interval 21–28 (GRPNVGKS) is G1. 21-28 (GRPNVGKS) is a GTP binding site. A G2 region spans residues 47–51 (QTTRH). The interval 68–71 (DTPG) is G3. Residues 68-72 (DTPGL) and 130-133 (NKTD) contribute to the GTP site. The G4 stretch occupies residues 130 to 133 (NKTD). The segment at 160–162 (ISA) is G5. The 85-residue stretch at 204–288 (VREKIMRQLG…MLNLWVKVKG (85 aa)) folds into the KH type-2 domain.

This sequence belongs to the TRAFAC class TrmE-Era-EngA-EngB-Septin-like GTPase superfamily. Era GTPase family. In terms of assembly, monomer.

The protein resides in the cytoplasm. Its subcellular location is the cell inner membrane. Functionally, an essential GTPase that binds both GDP and GTP, with rapid nucleotide exchange. Plays a role in 16S rRNA processing and 30S ribosomal subunit biogenesis and possibly also in cell cycle regulation and energy metabolism. The chain is GTPase Era from Pseudomonas aeruginosa (strain LESB58).